The sequence spans 206 residues: Protein tyrosine phosphatase receptor type C-associated protein (206 aa).

A helical membrane pass occupies residues 34–54 (VTVVLLLLLLLLLATGLALAW). The disordered stretch occupies residues 98–173 (GSTDNDLERQ…PGPASAGGSA (76 aa)). Phosphoserine is present on residues S99 and S153. A compositionally biased stretch (low complexity) spans 161–173 (LGSPGPASAGGSA).

As to quaternary structure, interacts with CD45/PTPRC. In terms of processing, phosphorylated on tyrosine residues.

The protein resides in the membrane. The polypeptide is Protein tyrosine phosphatase receptor type C-associated protein (PTPRCAP) (Homo sapiens (Human)).